A 99-amino-acid chain; its full sequence is Cell division protein FtsB (99 aa).

Residues Met-1–Phe-3 are Cytoplasmic-facing. A helical membrane pass occupies residues Phe-4–Ser-21. Topologically, residues Gly-22–Gln-99 are periplasmic. Residues Val-31–Asn-73 adopt a coiled-coil conformation.

This sequence belongs to the FtsB family. Part of a complex composed of FtsB, FtsL and FtsQ.

The protein resides in the cell inner membrane. Its function is as follows. Essential cell division protein. May link together the upstream cell division proteins, which are predominantly cytoplasmic, with the downstream cell division proteins, which are predominantly periplasmic. This Shewanella sp. (strain ANA-3) protein is Cell division protein FtsB.